A 317-amino-acid chain; its full sequence is Protoheme IX farnesyltransferase (317 aa).

7 helical membrane passes run 33-53 (VMSLVVFTAFAGLVLAPGEIN), 54-74 (PILGLIAILCIAVGAGASGAL), 117-137 (VILGLAVNWFSAGLLAFTIFF), 154-174 (IVIGGAAGAFPPMLGWACVTG), 181-201 (VILFLIIFLWTPAHFWALALF), 242-262 (FFTGLASAGYGIFAAVLSAIF), and 285-305 (MFAYSVLYLFAIFSGLLADHF).

The protein belongs to the UbiA prenyltransferase family. Protoheme IX farnesyltransferase subfamily.

It localises to the cell inner membrane. The enzyme catalyses heme b + (2E,6E)-farnesyl diphosphate + H2O = Fe(II)-heme o + diphosphate. Its pathway is porphyrin-containing compound metabolism; heme O biosynthesis; heme O from protoheme: step 1/1. In terms of biological role, converts heme B (protoheme IX) to heme O by substitution of the vinyl group on carbon 2 of heme B porphyrin ring with a hydroxyethyl farnesyl side group. In Agrobacterium fabrum (strain C58 / ATCC 33970) (Agrobacterium tumefaciens (strain C58)), this protein is Protoheme IX farnesyltransferase.